We begin with the raw amino-acid sequence, 202 residues long: Keratin-associated protein 5-10 (202 aa).

7 tandem repeats follow at residues 48–51 (CCKP), 54–57 (CCVP), 144–147 (CCKP), 162–165 (CCNP), 172–175 (CCVP), 182–185 (CCKP), and 192–195 (CCVP). Residues 48–195 (CCKPVCCCVP…CCCQSSCCVP (148 aa)) form a 7 X 4 AA repeats of C-C-X-P region.

It belongs to the KRTAP type 5 family. Interacts with hair keratins. Expressed in hair root but not in skin. Expressed also in brain and skeletal muscle.

In the hair cortex, hair keratin intermediate filaments are embedded in an interfilamentous matrix, consisting of hair keratin-associated protein (KRTAP), which are essential for the formation of a rigid and resistant hair shaft through their extensive disulfide bond cross-linking with abundant cysteine residues of hair keratins. The matrix proteins include the high-sulfur and high-glycine-tyrosine keratins. This is Keratin-associated protein 5-10 (KRTAP5-10) from Homo sapiens (Human).